We begin with the raw amino-acid sequence, 320 residues long: Cytochrome f (320 aa).

A signal peptide spans Met1–Ala35. Heme contacts are provided by Tyr36, Cys56, Cys59, and His60. The helical transmembrane segment at Val286–Lys306 threads the bilayer.

This sequence belongs to the cytochrome f family. In terms of assembly, the 4 large subunits of the cytochrome b6-f complex are cytochrome b6, subunit IV (17 kDa polypeptide, petD), cytochrome f and the Rieske protein, while the 4 small subunits are PetG, PetL, PetM and PetN. The complex functions as a dimer. Requires heme as cofactor.

The protein localises to the plastid. Its subcellular location is the chloroplast thylakoid membrane. Functionally, component of the cytochrome b6-f complex, which mediates electron transfer between photosystem II (PSII) and photosystem I (PSI), cyclic electron flow around PSI, and state transitions. In Citrus sinensis (Sweet orange), this protein is Cytochrome f.